The following is a 441-amino-acid chain: Capsid vertex component 1 (441 aa).

It belongs to the herpesviridae CVC1 protein family. In terms of assembly, interacts (via C-terminus) with capsid vertex component 2/CVC2.

Its subcellular location is the virion. The protein localises to the host nucleus. Capsid vertex-specific component that plays a role during viral DNA encapsidation, assuring correct genome cleavage and presumably stabilizing capsids that contain full-length viral genomes. This Saimiriine herpesvirus 2 (strain 11) (SaHV-2) protein is Capsid vertex component 1.